Here is a 188-residue protein sequence, read N- to C-terminus: GMP synthase [glutamine-hydrolyzing] subunit A (188 aa).

In terms of domain architecture, Glutamine amidotransferase type-1 spans 2–188 (KVGLVYYGGQ…FKNFLGVCRK (187 aa)). Residue Cys79 is the Nucleophile of the active site. Catalysis depends on residues His166 and Glu168.

As to quaternary structure, heterodimer composed of a glutamine amidotransferase subunit (A) and a GMP-binding subunit (B).

The catalysed reaction is XMP + L-glutamine + ATP + H2O = GMP + L-glutamate + AMP + diphosphate + 2 H(+). It functions in the pathway purine metabolism; GMP biosynthesis; GMP from XMP (L-Gln route): step 1/1. Its function is as follows. Catalyzes the synthesis of GMP from XMP. The protein is GMP synthase [glutamine-hydrolyzing] subunit A of Saccharolobus solfataricus (strain ATCC 35092 / DSM 1617 / JCM 11322 / P2) (Sulfolobus solfataricus).